Consider the following 1040-residue polypeptide: Multidrug resistance protein MdtB (1040 aa).

12 consecutive transmembrane segments (helical) span residues 25–45, 347–367, 369–389, 396–416, 440–460, 472–492, 537–557, 863–883, 888–908, 910–930, 968–988, and 998–1018; these read LLMAAILLAGIIGYRFLPVAA, LMLAIALVVMIIYLFLRNIPA, IIPGVAVPLSLIGTFAVMVFL, LTLMALTIATGFVVDDAIVVI, IGFTIISLTFSLIAVLIPLLF, FAVTLAVAILISAVVSLTLTP, WLTLSVAFATLLLSVMLWIVI, LGSTVWLIVAAVVAMYIVLGV, FIHPITILSTLPTAGVGALLA, IIAGSELDIIAIIGIILLIGI, ILMTTLAALLGALPLMLSTGV, and IAMVGGLLVSQVLTLFTTPVI.

Belongs to the resistance-nodulation-cell division (RND) (TC 2.A.6) family. MdtB subfamily. In terms of assembly, part of a tripartite efflux system composed of MdtA, MdtB and MdtC. MdtB forms a heteromultimer with MdtC.

The protein localises to the cell inner membrane. The protein is Multidrug resistance protein MdtB of Salmonella schwarzengrund (strain CVM19633).